A 946-amino-acid chain; its full sequence is Bifunctional glutamine synthetase adenylyltransferase/adenylyl-removing enzyme (946 aa).

The tract at residues 1-440 (MKPLSSPLQQ…VFNELIGDDE (440 aa)) is adenylyl removase. The segment at 449 to 946 (SEQWRELWQD…ASWQKWLVEE (498 aa)) is adenylyl transferase.

It belongs to the GlnE family. Mg(2+) serves as cofactor.

It catalyses the reaction [glutamine synthetase]-O(4)-(5'-adenylyl)-L-tyrosine + phosphate = [glutamine synthetase]-L-tyrosine + ADP. The enzyme catalyses [glutamine synthetase]-L-tyrosine + ATP = [glutamine synthetase]-O(4)-(5'-adenylyl)-L-tyrosine + diphosphate. Its function is as follows. Involved in the regulation of glutamine synthetase GlnA, a key enzyme in the process to assimilate ammonia. When cellular nitrogen levels are high, the C-terminal adenylyl transferase (AT) inactivates GlnA by covalent transfer of an adenylyl group from ATP to specific tyrosine residue of GlnA, thus reducing its activity. Conversely, when nitrogen levels are low, the N-terminal adenylyl removase (AR) activates GlnA by removing the adenylyl group by phosphorolysis, increasing its activity. The regulatory region of GlnE binds the signal transduction protein PII (GlnB) which indicates the nitrogen status of the cell. The polypeptide is Bifunctional glutamine synthetase adenylyltransferase/adenylyl-removing enzyme (Shigella dysenteriae serotype 1 (strain Sd197)).